The following is a 356-amino-acid chain: UDP-N-acetylglucosamine--N-acetylmuramyl-(pentapeptide) pyrophosphoryl-undecaprenol N-acetylglucosamine transferase (356 aa).

Residues serine 12–glycine 14, asparagine 120, arginine 163, serine 187, and glutamine 286 each bind UDP-N-acetyl-alpha-D-glucosamine.

The protein belongs to the glycosyltransferase 28 family. MurG subfamily.

The protein localises to the cell inner membrane. It catalyses the reaction di-trans,octa-cis-undecaprenyl diphospho-N-acetyl-alpha-D-muramoyl-L-alanyl-D-glutamyl-meso-2,6-diaminopimeloyl-D-alanyl-D-alanine + UDP-N-acetyl-alpha-D-glucosamine = di-trans,octa-cis-undecaprenyl diphospho-[N-acetyl-alpha-D-glucosaminyl-(1-&gt;4)]-N-acetyl-alpha-D-muramoyl-L-alanyl-D-glutamyl-meso-2,6-diaminopimeloyl-D-alanyl-D-alanine + UDP + H(+). It functions in the pathway cell wall biogenesis; peptidoglycan biosynthesis. Functionally, cell wall formation. Catalyzes the transfer of a GlcNAc subunit on undecaprenyl-pyrophosphoryl-MurNAc-pentapeptide (lipid intermediate I) to form undecaprenyl-pyrophosphoryl-MurNAc-(pentapeptide)GlcNAc (lipid intermediate II). In Pelagibacter ubique (strain HTCC1062), this protein is UDP-N-acetylglucosamine--N-acetylmuramyl-(pentapeptide) pyrophosphoryl-undecaprenol N-acetylglucosamine transferase.